The chain runs to 359 residues: Peptide chain release factor 1 (359 aa).

An N5-methylglutamine modification is found at glutamine 236.

Belongs to the prokaryotic/mitochondrial release factor family. Post-translationally, methylated by PrmC. Methylation increases the termination efficiency of RF1.

The protein localises to the cytoplasm. Its function is as follows. Peptide chain release factor 1 directs the termination of translation in response to the peptide chain termination codons UAG and UAA. The chain is Peptide chain release factor 1 from Malacoplasma penetrans (strain HF-2) (Mycoplasma penetrans).